The chain runs to 492 residues: MTSSLDTDILLVGGGIMSATLGTLLHQLNPELRITLVELQAEVATESSDGWNNAGTGHAGYCELNYTPQDADGSVPIARALKINAAFEESLQFWAWLVEKGILREPASFINPTPHSSFVWGEKNVAFLRKRHQALRAHHLFADMEYSQDPAVLQQWMPLVMAGRDPSIPVAATRVAYGSDVDFGSLTRQLVQHLQGRPGFKLLTRHAVTGLKQQGSWQVKAVDLSQGKPVEIRAGFVFLGAGGATLPLLQKSAIQEARGYGGFPVSGQWLVCHNPDVIHQHHAKVYGKAPLGAPPMSVPHLDTRIINGKPALLFGPFAGFTTRFLKRGSLLDLVNSVKRSNLKSMLGAGRHHMDLTRYLIGEVFQSHQQRMAALRNFYPLANESEWSLVSAGQRVQIIKQCEHQGGKLEFGTEIVSSADGSLAALLGASPGASTSVPAMLEVLQRCFSPQLQSAAWQERMREMLPSYGQSLIEDAELLRAVRYHTLSRLKLT.

It belongs to the MQO family. FAD is required as a cofactor.

It carries out the reaction (S)-malate + a quinone = a quinol + oxaloacetate. It participates in carbohydrate metabolism; tricarboxylic acid cycle; oxaloacetate from (S)-malate (quinone route): step 1/1. The polypeptide is Probable malate:quinone oxidoreductase (Methylobacillus flagellatus (strain ATCC 51484 / DSM 6875 / VKM B-1610 / KT)).